The primary structure comprises 603 residues: MAAARRARAGDPRAGFRRAAEEQSPAVPQGLIRAARKSGQLNLAGRGLGEVPQHVWRINLDTPEEAHQNLSFGAADRWWEQTDLTKLILASNQLRCLSEDVRLLPALTVLDVHDNQLTSLPSALGQLENLQKLDVSHNKLKSIPEELLQLSHLKGLLLQHNELSHLPDGFGQLVSLEELDLSNNHLTDIPKSFALLINLVRLNLACNQLKDLPADISAMKSLRQLDCTKNYLESVPSELASMASLEQLYLRKNKLRSLPELPSCKLLKELHAGENQIEILNAENLKHLNSLSVLELRDNKIKSVPDEITLLQKLERLDLANNDISRLPYTLGNLSQLKFLALEGNPLRTIRRDLLQKGTQELLKYLRSRIQDDKASPNEEPPVTAMTLPSESRINMHAITTLKLLDYSEKQVAVIPDDVFSAVRSNPVTSVNFSKNQLTAIPPRIVELKDSVCDVNFGFNKISSVSLELCTLHKLTHLDIRNNVLTSLPEEMEALTRLQVINLSFNRFKVFPSVLYRMLALETILLSNNQVGSIDPLQLKKMEQLGTLDLQNNDLLQVPPELGNCETLRTLLLEGNPFRTPRAAILAKGTAAVLEYLRSRIPT.

Residues 1–27 (MAAARRARAGDPRAGFRRAAEEQSPAV) form a disordered region. 20 LRR repeats span residues 83–104 (DLTK…VRLL), 106–127 (ALTV…LGQL), 129–150 (NLQK…LLQL), 152–173 (HLKG…FGQL), 175–196 (SLEE…FALL), 198–219 (NLVR…ISAM), 221–242 (SLRQ…LASM), 244–265 (SLEQ…PSCK), 266–286 (LLKE…ENLK), 290–311 (SLSV…ITLL), 313–335 (KLER…GNLS), 336–357 (QLKF…LLQK), 401–422 (TLKL…VFSA), 427–449 (PVTS…VELK), 451–473 (SVCD…CTLH), 474–495 (KLTH…MEAL), 497–518 (RLQV…LYRM), 520–541 (ALET…QLKK), 544–565 (QLGT…LGNC), and 567–588 (TLRT…ILAK).

The protein is Leucine-rich repeat-containing protein 40 (LRRC40) of Gallus gallus (Chicken).